The following is a 271-amino-acid chain: Regulatory protein RecX (271 aa).

This sequence belongs to the RecX family.

The protein resides in the cytoplasm. Its function is as follows. Modulates RecA activity. This chain is Regulatory protein RecX, found in Lactobacillus delbrueckii subsp. bulgaricus (strain ATCC BAA-365 / Lb-18).